The following is a 151-amino-acid chain: Single-stranded DNA-binding protein, mitochondrial (151 aa).

The transit peptide at 1–16 directs the protein to the mitochondrion; sequence MFRRPVLQVFRQFVRQ. In terms of domain architecture, SSB spans 30–141; that stretch reads LNRVQLLGRV…IIADNIIFLS (112 aa). Phosphoserine is present on residues Ser67 and Ser79. Lys113 carries the post-translational modification N6-acetyllysine. Lys122 carries the post-translational modification N6-succinyllysine.

As to quaternary structure, homotetramer. Interacts with MPG/AAG, through inhibition of its glycosylase activity it potentially prevents formation of DNA breaks in ssDNA, ensuring that base removal primarily occurs in dsDNA. Interacts with POLDIP2. Interacts with PRIMPOL.

The protein localises to the mitochondrion. Its subcellular location is the mitochondrion matrix. The protein resides in the mitochondrion nucleoid. Binds preferentially and cooperatively to pyrimidine rich single-stranded DNA (ss-DNA). In vitro, required to maintain the copy number of mitochondrial DNA (mtDNA) and plays a crucial role during mtDNA replication by stimulating the activity of the replisome components POLG and TWNK at the replication fork. Promotes the activity of the gamma complex polymerase POLG, largely by organizing the template DNA and eliminating secondary structures to favor ss-DNA conformations that facilitate POLG activity. In addition it is able to promote the 5'-3' unwinding activity of the mtDNA helicase TWNK. May also function in mtDNA repair. This chain is Single-stranded DNA-binding protein, mitochondrial (Ssbp1), found in Rattus norvegicus (Rat).